Here is a 156-residue protein sequence, read N- to C-terminus: Probable succinate transporter subunit YjjB (156 aa).

4 helical membrane-spanning segments follow: residues 7-27 (WALL…AMVF), 54-74 (FGMN…IIGI), 86-106 (VFTV…TAMI), and 128-148 (FLKA…PGIW).

Belongs to the ThrE exporter (TC 2.A.79) family. In terms of assembly, the transporter is composed of YjjB and YjjP.

The protein resides in the cell inner membrane. Involved in succinate export with YjjP. Both proteins are required for export. This is Probable succinate transporter subunit YjjB from Pectobacterium carotovorum subsp. carotovorum (strain PC1).